The chain runs to 537 residues: Carboxypeptidase Y homolog A (537 aa).

Positions 1–17 (MRLSTSALVLGAASSAV) are cleaved as a signal peptide. Positions 18 to 124 (AFDQKVLGDL…RLDNYNLRAK (107 aa)) are excised as a propeptide. 5 disulfide bridges follow: C178/C418, C312/C326, C336/C359, C343/C352, and C381/C388. The N-linked (GlcNAc...) asparagine glycan is linked to N209. S265 is a catalytic residue. The active site involves D457. An N-linked (GlcNAc...) asparagine glycan is attached at N503. H514 is an active-site residue.

This sequence belongs to the peptidase S10 family.

It is found in the vacuole. It catalyses the reaction Release of a C-terminal amino acid with broad specificity.. In terms of biological role, vacuolar carboxypeptidase involved in degradation of small peptides. Digests preferentially peptides containing an aliphatic or hydrophobic residue in P1' position, as well as methionine, leucine or phenylalanine in P1 position of ester substrate. The protein is Carboxypeptidase Y homolog A (CPYA) of Fusarium vanettenii (strain ATCC MYA-4622 / CBS 123669 / FGSC 9596 / NRRL 45880 / 77-13-4) (Fusarium solani subsp. pisi).